Consider the following 450-residue polypeptide: UDP-N-acetylmuramoylalanine--D-glutamate ligase (450 aa).

Residue 119 to 125 (GSNGKTT) participates in ATP binding.

It belongs to the MurCDEF family.

It is found in the cytoplasm. The enzyme catalyses UDP-N-acetyl-alpha-D-muramoyl-L-alanine + D-glutamate + ATP = UDP-N-acetyl-alpha-D-muramoyl-L-alanyl-D-glutamate + ADP + phosphate + H(+). The protein operates within cell wall biogenesis; peptidoglycan biosynthesis. Functionally, cell wall formation. Catalyzes the addition of glutamate to the nucleotide precursor UDP-N-acetylmuramoyl-L-alanine (UMA). The protein is UDP-N-acetylmuramoylalanine--D-glutamate ligase of Streptococcus pneumoniae serotype 19F (strain G54).